Here is a 142-residue protein sequence, read N- to C-terminus: HTH-type transcriptional regulator MntR (142 aa).

Residues 1–63 form the HTH dtxR-type domain; the sequence is MPTPSMEDYI…YEKYRGLILT (63 aa). Aspartate 8, glutamate 11, histidine 77, glutamate 99, glutamate 102, and histidine 103 together coordinate Mn(2+).

The protein belongs to the DtxR/MntR family. In terms of assembly, homodimer.

It localises to the cytoplasm. Its activity is regulated as follows. DNA binding is strongly activated by Mn(2+). Its function is as follows. Central regulator of manganese homeostasis. The sequence is that of HTH-type transcriptional regulator MntR from Listeria monocytogenes serotype 4b (strain CLIP80459).